The sequence spans 500 residues: Lysine--tRNA ligase (500 aa).

The Mg(2+) site is built by Glu410 and Glu417.

Belongs to the class-II aminoacyl-tRNA synthetase family. In terms of assembly, homodimer. Requires Mg(2+) as cofactor.

The protein localises to the cytoplasm. The catalysed reaction is tRNA(Lys) + L-lysine + ATP = L-lysyl-tRNA(Lys) + AMP + diphosphate. The sequence is that of Lysine--tRNA ligase from Shewanella sp. (strain ANA-3).